A 118-amino-acid polypeptide reads, in one-letter code: Small ribosomal subunit protein uS13 (118 aa).

Positions 94-118 (SLPLRGQRTKTNARTRKGPRKPIRK) are disordered.

This sequence belongs to the universal ribosomal protein uS13 family. As to quaternary structure, part of the 30S ribosomal subunit. Forms a loose heterodimer with protein S19. Forms two bridges to the 50S subunit in the 70S ribosome.

Its function is as follows. Located at the top of the head of the 30S subunit, it contacts several helices of the 16S rRNA. In the 70S ribosome it contacts the 23S rRNA (bridge B1a) and protein L5 of the 50S subunit (bridge B1b), connecting the 2 subunits; these bridges are implicated in subunit movement. Contacts the tRNAs in the A and P-sites. The chain is Small ribosomal subunit protein uS13 from Shewanella frigidimarina (strain NCIMB 400).